Here is a 154-residue protein sequence, read N- to C-terminus: Troponin C, isoform 1 (154 aa).

4 EF-hand domains span residues 8 to 43 (EQTA…LGHQ), 44 to 79 (LDDA…FLVE), 84 to 119 (AMMA…LDDK), and 120 to 154 (LTND…GGDD). Aspartate 57, aspartate 59, serine 61, glutamine 63, and glutamate 68 together coordinate Ca(2+). Aspartate 133, aspartate 135, serine 137, threonine 139, and glutamate 144 together coordinate Ca(2+).

This sequence belongs to the troponin C family. In terms of tissue distribution, present only in adult muscles.

This chain is Troponin C, isoform 1 (TpnC41C), found in Drosophila melanogaster (Fruit fly).